A 241-amino-acid polypeptide reads, in one-letter code: Orotidine 5'-phosphate decarboxylase (241 aa).

Substrate is bound by residues Asp15, Lys36, 63-72, Thr127, Arg189, Gln198, Gly218, and Arg219; that span reads DLKFHDIPNT. Residue Lys65 is the Proton donor of the active site.

Belongs to the OMP decarboxylase family. Type 1 subfamily. As to quaternary structure, homodimer.

The catalysed reaction is orotidine 5'-phosphate + H(+) = UMP + CO2. Its pathway is pyrimidine metabolism; UMP biosynthesis via de novo pathway; UMP from orotate: step 2/2. Functionally, catalyzes the decarboxylation of orotidine 5'-monophosphate (OMP) to uridine 5'-monophosphate (UMP). This is Orotidine 5'-phosphate decarboxylase from Prochlorococcus marinus (strain MIT 9211).